The following is a 216-amino-acid chain: MNSNKMTINLALFGMTQSGKSSAGNIILGSTDFHSSFAPCSVTRDCSLGRSCHFRSFMRRGGQEVTLQVQVLDTPGYPHSRLSKKHVRQEVREALAHHFGQEGLHLALLVQRADVPLCGQEESSPVQMIQELLGHTWMNYTAILFTHAEKIEEAGFNEDEYLREASETLLKLLNSIQHRYIFQYKKGNSLSEQRLKILERIIEFVKENCYQVLTFK.

The 212-residue stretch at 5-216 (KMTINLALFG…ENCYQVLTFK (212 aa)) folds into the AIG1-type G domain. GTP is bound by residues 14–22 (GMTQSGKSS), S35, and 147–149 (HAE).

Belongs to the TRAFAC class TrmE-Era-EngA-EngB-Septin-like GTPase superfamily. AIG1/Toc34/Toc159-like paraseptin GTPase family. IAN subfamily.

This is GTPase IMAP family member GIMD1 (GIMD1) from Bos taurus (Bovine).